A 232-amino-acid polypeptide reads, in one-letter code: MAKLTKKQKEAQSKIENGKTYTVAEASALIKEVSNANFDASVDLAVRLNVDPRKANQMVRGVVTLPHGTGKDVKVLALVTPDKEEEAKEAGADYVGLDEYLDKIKGGWTDVDVIITMPSVMGKLGPLGRVLGPRGLMPNPKTGTVTMDIAKAVSDVKAGKIDFKVDKHGIVHAGVGKASFDAEKIAGNARELLTTLVKLKPQAAKGVYIKTIYMSSTMSPSVQIDTKRFTEQ.

The protein belongs to the universal ribosomal protein uL1 family. As to quaternary structure, part of the 50S ribosomal subunit.

Its function is as follows. Binds directly to 23S rRNA. The L1 stalk is quite mobile in the ribosome, and is involved in E site tRNA release. Protein L1 is also a translational repressor protein, it controls the translation of the L11 operon by binding to its mRNA. This chain is Large ribosomal subunit protein uL1, found in Christiangramia forsetii (strain DSM 17595 / CGMCC 1.15422 / KT0803) (Gramella forsetii).